A 289-amino-acid chain; its full sequence is uncharacterized protein (289 aa).

10 helical membrane-spanning segments follow: residues 7-27, 33-53, 65-85, 92-112, 123-143, 148-168, 182-202, 212-232, 241-261, and 265-285; these read LLLA…KIGL, FNLA…WVFW, WLHL…FQFL, ATNA…WGLV, GVFL…LEFF, IFGD…TVLG, AYAF…SGFA, VAAL…VWYY, SVAV…FYAL, and PDFF…LTTA. 2 consecutive EamA domains span residues 14–136 and 159–285; these read LIWA…LIVS and FLWA…LTTA.

This sequence belongs to the EamA transporter family.

Its subcellular location is the cell membrane. This is an uncharacterized protein from Archaeoglobus fulgidus (strain ATCC 49558 / DSM 4304 / JCM 9628 / NBRC 100126 / VC-16).